The primary structure comprises 155 residues: SsrA-binding protein (155 aa).

Belongs to the SmpB family.

The protein resides in the cytoplasm. Its function is as follows. Required for rescue of stalled ribosomes mediated by trans-translation. Binds to transfer-messenger RNA (tmRNA), required for stable association of tmRNA with ribosomes. tmRNA and SmpB together mimic tRNA shape, replacing the anticodon stem-loop with SmpB. tmRNA is encoded by the ssrA gene; the 2 termini fold to resemble tRNA(Ala) and it encodes a 'tag peptide', a short internal open reading frame. During trans-translation Ala-aminoacylated tmRNA acts like a tRNA, entering the A-site of stalled ribosomes, displacing the stalled mRNA. The ribosome then switches to translate the ORF on the tmRNA; the nascent peptide is terminated with the 'tag peptide' encoded by the tmRNA and targeted for degradation. The ribosome is freed to recommence translation, which seems to be the essential function of trans-translation. This is SsrA-binding protein from Bacillus cereus (strain 03BB102).